Consider the following 593-residue polypeptide: NADH-quinone oxidoreductase subunit C/D (593 aa).

Residues Met1–Gln184 form an NADH dehydrogenase I subunit C region. Positions Asp208 to Arg593 are NADH dehydrogenase I subunit D.

It in the N-terminal section; belongs to the complex I 30 kDa subunit family. The protein in the C-terminal section; belongs to the complex I 49 kDa subunit family. In terms of assembly, NDH-1 is composed of 13 different subunits. Subunits NuoB, CD, E, F, and G constitute the peripheral sector of the complex.

It localises to the cell inner membrane. The catalysed reaction is a quinone + NADH + 5 H(+)(in) = a quinol + NAD(+) + 4 H(+)(out). In terms of biological role, NDH-1 shuttles electrons from NADH, via FMN and iron-sulfur (Fe-S) centers, to quinones in the respiratory chain. The immediate electron acceptor for the enzyme in this species is believed to be ubiquinone. Couples the redox reaction to proton translocation (for every two electrons transferred, four hydrogen ions are translocated across the cytoplasmic membrane), and thus conserves the redox energy in a proton gradient. This is NADH-quinone oxidoreductase subunit C/D from Pseudomonas fluorescens (strain ATCC BAA-477 / NRRL B-23932 / Pf-5).